The primary structure comprises 298 residues: 4-hydroxy-tetrahydrodipicolinate synthase (298 aa).

Residue T45 coordinates pyruvate. The active-site Proton donor/acceptor is the Y133. K161 serves as the catalytic Schiff-base intermediate with substrate. I203 is a binding site for pyruvate.

Belongs to the DapA family. In terms of assembly, homotetramer; dimer of dimers.

It is found in the cytoplasm. It catalyses the reaction L-aspartate 4-semialdehyde + pyruvate = (2S,4S)-4-hydroxy-2,3,4,5-tetrahydrodipicolinate + H2O + H(+). It participates in amino-acid biosynthesis; L-lysine biosynthesis via DAP pathway; (S)-tetrahydrodipicolinate from L-aspartate: step 3/4. Its function is as follows. Catalyzes the condensation of (S)-aspartate-beta-semialdehyde [(S)-ASA] and pyruvate to 4-hydroxy-tetrahydrodipicolinate (HTPA). This chain is 4-hydroxy-tetrahydrodipicolinate synthase, found in Wigglesworthia glossinidia brevipalpis.